Consider the following 203-residue polypeptide: Ribonuclease T (203 aa).

Positions 11 to 185 constitute an Exonuclease domain; the sequence is VVVDVETGGF…YDTEKTAELF (175 aa). Mg(2+) is bound by residues aspartate 14, glutamate 16, histidine 172, and aspartate 177. The active-site Proton donor/acceptor is histidine 172.

It belongs to the RNase T family. Homodimer. Mg(2+) is required as a cofactor.

Functionally, trims short 3' overhangs of a variety of RNA species, leaving a one or two nucleotide 3' overhang. Responsible for the end-turnover of tRNA: specifically removes the terminal AMP residue from uncharged tRNA (tRNA-C-C-A). Also appears to be involved in tRNA biosynthesis. The chain is Ribonuclease T from Pseudomonas putida (strain ATCC 47054 / DSM 6125 / CFBP 8728 / NCIMB 11950 / KT2440).